The primary structure comprises 1085 residues: Translation factor GUF1 homolog, mitochondrial (1085 aa).

The 178-residue stretch at 232–409 (KYIRNFCILA…RIISDIPPPI (178 aa)) folds into the tr-type G domain. GTP is bound by residues 241–248 (AHIDSGKS), 302–306 (DTPGH), and 356–359 (NKID).

The protein belongs to the TRAFAC class translation factor GTPase superfamily. Classic translation factor GTPase family. LepA subfamily.

The protein resides in the mitochondrion inner membrane. It carries out the reaction GTP + H2O = GDP + phosphate + H(+). Functionally, promotes mitochondrial protein synthesis. May act as a fidelity factor of the translation reaction, by catalyzing a one-codon backward translocation of tRNAs on improperly translocated ribosomes. Binds to mitochondrial ribosomes in a GTP-dependent manner. In Plasmodium falciparum (isolate 3D7), this protein is Translation factor GUF1 homolog, mitochondrial.